The chain runs to 132 residues: Photosystem II extrinsic protein U (132 aa).

A signal peptide spans 1–29; that stretch reads MKRLLSWLTGALVMAGLLSSLVLPSAVYA.

This sequence belongs to the PsbU family. In terms of assembly, PSII is composed of 1 copy each of membrane proteins PsbA, PsbB, PsbC, PsbD, PsbE, PsbF, PsbH, PsbI, PsbJ, PsbK, PsbL, PsbM, PsbT, PsbX, PsbY, PsbZ, Psb30/Ycf12, peripheral proteins PsbO, CyanoQ (PsbQ), PsbU, PsbV and a large number of cofactors. It forms dimeric complexes.

The protein localises to the cellular thylakoid membrane. In terms of biological role, one of the extrinsic, lumenal subunits of photosystem II (PSII). PSII is a light-driven water plastoquinone oxidoreductase, using light energy to abstract electrons from H(2)O, generating a proton gradient subsequently used for ATP formation. The extrinsic proteins stabilize the structure of photosystem II oxygen-evolving complex (OEC), the ion environment of oxygen evolution and protect the OEC against heat-induced inactivation. The sequence is that of Photosystem II extrinsic protein U from Synechococcus sp. (strain CC9902).